The chain runs to 410 residues: Divergent protein kinase domain 1C (410 aa).

The Cytoplasmic portion of the chain corresponds to 1–19; the sequence is MARAAGERGRAARCGRWRR. Residues 18-19 carry the May mediate ER retention motif; it reads RR. The chain crosses the membrane as a helical span at residues 20–40; it reads GALLAFAAWTAGWVLAAALLL. The Lumenal portion of the chain corresponds to 41-410; it reads RAHPSVLSER…TLKELQEAEK (370 aa).

The protein belongs to the DIPK family. In terms of processing, among the many cysteines in the lumenal domain, most are probably involved in disulfide bonds. Mainly expressed in the brain and eye, some expression in kidney and skeletal muscle.

It is found in the endoplasmic reticulum membrane. The chain is Divergent protein kinase domain 1C (Dipk1c) from Mus musculus (Mouse).